The primary structure comprises 386 residues: Probable zinc transporter zrg17 (386 aa).

The next 6 membrane-spanning stretches (helical) occupy residues 102–122, 128–148, 163–183, 208–228, 243–263, and 268–288; these read ILFF…ILLT, IVEG…SFLV, MELL…MNLL, VHIH…FALL, FFHG…SLGY, and FLSH…GFSI.

It belongs to the cation diffusion facilitator (CDF) transporter (TC 2.A.4) family. SLC30A subfamily. Interacts with cis4.

The protein resides in the cytoplasm. The protein localises to the nucleus membrane. Functionally, probable transporter involved in the regulation of zinc homeostasis. The polypeptide is Probable zinc transporter zrg17 (zrg17) (Schizosaccharomyces pombe (strain 972 / ATCC 24843) (Fission yeast)).